A 373-amino-acid chain; its full sequence is Polygalacturonase (373 aa).

The N-terminal stretch at 1-24 (MVRNIVSRLCSQLFALPSSSLQER) is a signal peptide. The cysteines at positions 27 and 42 are disulfide-linked. N-linked (GlcNAc...) asparagine glycosylation is found at Asn65 and Asn94. PbH1 repeat units lie at residues 136 to 158 (TGNSKITNLNIQNWPVHCFDITG), 159 to 197 (SSQLTISGLILDNRAGDKPNAKSGSLPAAHNTDGFDISS), 198 to 219 (SDHVTLDNNHVYNQDDCVAVTS), 220 to 240 (GTNIVVSNMYCSGGHGLSIGS), 249 to 270 (VDGVQFLSSQVVNSQNGCRIKS), 278 to 300 (INNVTYQNIALTNISTYGVDVQQ), 312 to 333 (TNGVKISNIKFIKVTGTVASSA), and 345 to 369 (CSGFTFSGNAITGGGKTSSCNYPTN). The active-site Proton donor is the Asp212. An intrachain disulfide couples Cys214 to Cys230. His234 is a catalytic residue. N-linked (GlcNAc...) asparagine glycosylation is found at Asn280 and Asn290. 2 disulfides stabilise this stretch: Cys340/Cys345 and Cys364/Cys371.

This sequence belongs to the glycosyl hydrolase 28 family.

Its subcellular location is the secreted. The catalysed reaction is (1,4-alpha-D-galacturonosyl)n+m + H2O = (1,4-alpha-D-galacturonosyl)n + (1,4-alpha-D-galacturonosyl)m.. Involved in maceration and soft-rotting of plant tissue. Hydrolyzes the 1,4-alpha glycosidic bonds of de-esterified pectate in the smooth region of the plant cell wall. The sequence is that of Polygalacturonase (PGA) from Fusarium fujikuroi (Bakanae and foot rot disease fungus).